Reading from the N-terminus, the 92-residue chain is Small ribosomal subunit protein uS19 (92 aa).

In terms of biological role, protein S19 forms a complex with S13 that binds strongly to the 16S ribosomal RNA. The polypeptide is Small ribosomal subunit protein uS19 (Rhodopseudomonas palustris (strain ATCC BAA-98 / CGA009)).